A 614-amino-acid polypeptide reads, in one-letter code: Acetylcholinesterase (614 aa).

An N-terminal signal peptide occupies residues Met1–Ala31. Cys100 and Cys127 are joined by a disulfide. A galanthamine-binding site is contributed by Trp117. Huperzine A is bound at residue Trp117. Gly153 contacts huprine W. Tyr164 contributes to the huperzine A binding site. Galanthamine is bound at residue Glu233–Ser234. Ser234 contributes to the huprine W binding site. Ser234 functions as the Acyl-ester intermediate in the catalytic mechanism. A disulfide bridge connects residues Cys288 and Cys303. The N-linked (GlcNAc...) asparagine glycan is linked to Asn296. Glu365 serves as the catalytic Charge relay system. Tyr368 contacts galanthamine. Huperzine A is bound at residue Tyr368. Asn381 carries an N-linked (GlcNAc...) asparagine glycan. Cys440 and Cys560 are joined by a disulfide. Positions 470 and 478 each coordinate huprine W. The active-site Charge relay system is the His478. An N-linked (GlcNAc...) asparagine glycan is attached at Asn495. Phe588 is lipidated: GPI-anchor amidated glycine.

Belongs to the type-B carboxylesterase/lipase family. As to quaternary structure, interacts with PRIMA1. The interaction with PRIMA1 is required to anchor it to the basal lamina of cells and organize into tetramers. Isoform H generates GPI-anchored dimers; disulfide linked. Isoform T generates multiple structures, ranging from monomers and dimers to collagen-tailed and hydrophobic-tailed forms, in which catalytic tetramers are associated with anchoring proteins that attach them to the basal lamina or to cell membranes. In the collagen-tailed forms, isoform T subunits are associated with a specific collagen, COLQ, which triggers the formation of isoform T tetramers, from monomers and dimers. Isoform R may be monomeric. In terms of tissue distribution, isoform H is highly expressed in erythrocytes.

The protein resides in the synapse. It localises to the secreted. It is found in the cell membrane. Its subcellular location is the nucleus. It catalyses the reaction acetylcholine + H2O = choline + acetate + H(+). In terms of biological role, hydrolyzes rapidly the acetylcholine neurotransmitter released into the synaptic cleft allowing to terminate the signal transduction at the neuromuscular junction. Role in neuronal apoptosis. This is Acetylcholinesterase from Homo sapiens (Human).